A 700-amino-acid polypeptide reads, in one-letter code: Pyrroloquinoline quinone transporter (700 aa).

A signal peptide spans methionine 1 to alanine 23. The TBDR plug domain occupies serine 39–glutamine 157. 24 beta stranded membrane-spanning segments follow: residues asparagine 132 to leucine 136, glycine 150 to glutamine 160, proline 162 to tyrosine 171, tryptophan 177 to alanine 186, aspartate 195 to arginine 204, leucine 220 to valine 227, serine 233 to serine 241, glutamine 280 to serine 288, methionine 295 to alanine 301, glycine 335 to glycine 344, valine 350 to tyrosine 358, aspartate 398 to tryptophan 405, leucine 411 to tyrosine 419, tryptophan 447 to alanine 456, tyrosine 464 to glycine 468, threonine 500 to isoleucine 509, aspartate 511 to glutamine 520, glycine 549 to glutamine 556, arginine 563 to tryptophan 570, methionine 597 to tyrosine 604, tyrosine 611 to arginine 617, leucine 637 to asparagine 647, leucine 651 to valine 659, and tyrosine 689 to tryptophan 697. The TBDR beta-barrel domain occupies proline 162–tryptophan 697. A TonB C-terminal box motif is present at residues tyrosine 680–glutamate 700.

This sequence belongs to the TonB-dependent receptor family.

The protein localises to the cell outer membrane. Its function is as follows. Mediates the TonB-dependent high affinity transport across the outer membrane of pyrroloquinoline quinone (PQQ), a redox cofactor required for the activity of Gcd and Asd dehydrogenases. The uptake process is energised via the TonB-ExbBD complex. Not involved in the transport of an iron-containing substrate under laboratory conditions. The protein is Pyrroloquinoline quinone transporter of Escherichia coli (strain K12).